The primary structure comprises 125 residues: Ribonuclease P protein component 1 (125 aa).

Residues 1–13 (MRRNGKEGKDRAP) show a composition bias toward basic and acidic residues. The disordered stretch occupies residues 1–24 (MRRNGKEGKDRAPGRPQRKGQEVA).

This sequence belongs to the eukaryotic/archaeal RNase P protein component 1 family. In terms of assembly, consists of a catalytic RNA component and at least 4-5 protein subunits.

The protein localises to the cytoplasm. It catalyses the reaction Endonucleolytic cleavage of RNA, removing 5'-extranucleotides from tRNA precursor.. In terms of biological role, part of ribonuclease P, a protein complex that generates mature tRNA molecules by cleaving their 5'-ends. This chain is Ribonuclease P protein component 1, found in Thermococcus onnurineus (strain NA1).